The primary structure comprises 623 residues: Chaperone protein DnaK (623 aa).

The segment covering 582 to 603 has biased composition (low complexity); that stretch reads QQQQAAEQAAQQQSGGQQASGS. Residues 582–623 form a disordered region; it reads QQQQAAEQAAQQQSGGQQASGSNPGKDPNVVDADYEVVNDKK. Residues 614–623 are compositionally biased toward acidic residues; it reads ADYEVVNDKK.

It belongs to the heat shock protein 70 family.

Its function is as follows. Acts as a chaperone. The sequence is that of Chaperone protein DnaK from Methanocella arvoryzae (strain DSM 22066 / NBRC 105507 / MRE50).